A 455-amino-acid polypeptide reads, in one-letter code: tRNA modification GTPase MnmE (455 aa).

Arg-24, Glu-81, and Lys-120 together coordinate (6S)-5-formyl-5,6,7,8-tetrahydrofolate. In terms of domain architecture, TrmE-type G spans 216–378 (GMTVVIAGRP…LREHLKHCMG (163 aa)). Asn-226 lines the K(+) pocket. GTP-binding positions include 226–231 (NAGKSS), 245–251 (TDIAGTT), 270–273 (DTAG), and 335–338 (NKAD). Ser-230 contacts Mg(2+). Thr-245, Ile-247, and Thr-250 together coordinate K(+). Thr-251 is a Mg(2+) binding site. Lys-455 contributes to the (6S)-5-formyl-5,6,7,8-tetrahydrofolate binding site.

This sequence belongs to the TRAFAC class TrmE-Era-EngA-EngB-Septin-like GTPase superfamily. TrmE GTPase family. In terms of assembly, homodimer. Heterotetramer of two MnmE and two MnmG subunits. K(+) serves as cofactor.

The protein localises to the cytoplasm. Exhibits a very high intrinsic GTPase hydrolysis rate. Involved in the addition of a carboxymethylaminomethyl (cmnm) group at the wobble position (U34) of certain tRNAs, forming tRNA-cmnm(5)s(2)U34. In Stutzerimonas stutzeri (strain A1501) (Pseudomonas stutzeri), this protein is tRNA modification GTPase MnmE.